Here is a 545-residue protein sequence, read N- to C-terminus: Serine/threonine-protein kinase PAK 1 (545 aa).

The disordered stretch occupies residues 1–75 (MSNNGVDIQD…KKREKERPEI (75 aa)). Ser-2 carries the post-translational modification N-acetylserine. Position 21 is a phosphoserine; by PKB and autocatalysis (Ser-21). Ser-57 is subject to Phosphoserine; by autocatalysis. Positions 70 to 140 (KERPEISLPS…YNSKKTSNSK (71 aa)) are autoregulatory region. The 14-residue stretch at 75 to 88 (ISLPSDFEHTIHVG) folds into the CRIB domain. Residues 75–105 (ISLPSDFEHTIHVGFDAVTGEFTGMPEQWAR) are GTPase-binding. Thr-84 bears the Phosphothreonine; by OXSR1 mark. Ser-115 is modified (phosphoserine). Phosphotyrosine occurs at positions 131 and 142. A phosphoserine; by autocatalysis mark is found at Ser-144 and Ser-149. The interval 150-198 (AEDYNSSNTLNVKTVSETPAVPPVSEDDEDDDDDATPPPVIAPRPEHTK) is disordered. Residues 152–166 (DYNSSNTLNVKTVSE) show a composition bias toward polar residues. Tyr-153 bears the Phosphotyrosine; by JAK2 mark. Position 174 is a phosphoserine (Ser-174). Residues 174–184 (SEDDEDDDDDA) show a composition bias toward acidic residues. At Thr-185 the chain carries Phosphothreonine. A Phosphoserine; by autocatalysis modification is found at Ser-199. The residue at position 201 (Tyr-201) is a Phosphotyrosine; by JAK2. Ser-204 bears the Phosphoserine; by autocatalysis mark. Residues 210–250 (PVTPTRDVATSPISPTENNTTPPDALTRNTEKQKKKPKMSD) are disordered. A phosphothreonine mark is found at Thr-212 and Thr-219. Phosphoserine is present on residues Ser-220 and Ser-223. Positions 220–231 (SPISPTENNTTP) are enriched in polar residues. 3 positions are modified to phosphothreonine: Thr-225, Thr-229, and Thr-230. One can recognise a Protein kinase domain in the interval 270–521 (YTPFEKIGQG…AKELLQHQFL (252 aa)). 276 to 284 (IGQGASGTV) contacts ATP. Tyr-285 is modified (phosphotyrosine; by JAK2). Residue Lys-299 participates in ATP binding. The active-site Proton acceptor is the Asp-389. Thr-423 bears the Phosphothreonine; by autocatalysis, BRSK2 and PDPK1 mark.

This sequence belongs to the protein kinase superfamily. STE Ser/Thr protein kinase family. STE20 subfamily. As to quaternary structure, homodimer in its autoinhibited state. Active as monomer. Interacts with GIT1. Component of cytoplasmic complexes, which also contains PXN, ARHGEF7 and GIT1. Interacts with NISCH. Interacts with DVL1; mediates the formation of a DVL1, MUSK and PAK1 ternary complex involved in AChR clustering. Binds to the caspase-cleaved p110 isoform of CDC2L1 and CDC2L2, p110C, but not the full-length proteins. Interacts with ARHGEF7. Interacts tightly with GTP-bound but not GDP-bound CDC42/P21 and RAC1. Interacts with SCRIB. Interacts with PDPK1. Interacts (via kinase domain) with RAF1. Interacts with NCK1 and NCK2. Interacts with TBCB. Interacts with BRSK2. Interacts with SNAI1. Interacts with CIB1 (via N-terminal region); the interaction is direct, promotes PAK1 activity and occurs in a calcium-dependent manner. Interacts with INPP5K. Interacts with gamma-tubulin. Interacts with RHOU; the interaction promotes PAK1 activation. Mg(2+) is required as a cofactor. Autophosphorylated in trans, meaning that in a dimer, one kinase molecule phosphorylates the other one. Activated by autophosphorylation at Thr-423 in response to a conformation change, triggered by interaction with GTP-bound CDC42 or RAC1. Activated by phosphorylation at Thr-423 by BRSK2 and by PDPK1. Phosphorylated by JAK2 in response to PRL; this increases PAK1 kinase activity. Phosphorylated at Ser-21 by PKB/AKT; this reduces interaction with NCK1 and association with focal adhesion sites. Upon DNA damage, phosphorylated at Thr-212 and translocates to the nucleoplasm. Phosphorylated at tyrosine residues, which can be enhanced by NTN1.

The protein resides in the cytoplasm. The protein localises to the cell junction. It is found in the focal adhesion. It localises to the cell projection. Its subcellular location is the lamellipodium. The protein resides in the cell membrane. The protein localises to the ruffle membrane. It is found in the invadopodium. It localises to the nucleus. Its subcellular location is the nucleoplasm. The protein resides in the chromosome. The protein localises to the cytoskeleton. It is found in the microtubule organizing center. It localises to the centrosome. The enzyme catalyses L-seryl-[protein] + ATP = O-phospho-L-seryl-[protein] + ADP + H(+). The catalysed reaction is L-threonyl-[protein] + ATP = O-phospho-L-threonyl-[protein] + ADP + H(+). Phosphorylation of Thr-84 by OXSR1 inhibits activation. Activated by binding small G proteins. Binding of GTP-bound CDC42 or RAC1 to the autoregulatory region releases monomers from the autoinhibited dimer, and enables activation by phosphorylation of Thr-423. Its function is as follows. Protein kinase involved in intracellular signaling pathways downstream of integrins and receptor-type kinases that plays an important role in cytoskeleton dynamics, in cell adhesion, migration, proliferation, apoptosis, mitosis, and in vesicle-mediated transport processes. Can directly phosphorylate BAD and protects cells against apoptosis. Activated by interaction with CDC42 and RAC1. Functions as a GTPase effector that links the Rho-related GTPases CDC42 and RAC1 to the JNK MAP kinase pathway. Phosphorylates and activates MAP2K1, and thereby mediates activation of downstream MAP kinases. Involved in the reorganization of the actin cytoskeleton, actin stress fibers and of focal adhesion complexes. Phosphorylates the tubulin chaperone TBCB and thereby plays a role in the regulation of microtubule biogenesis and organization of the tubulin cytoskeleton. Plays a role in the regulation of insulin secretion in response to elevated glucose levels. Part of a ternary complex that contains PAK1, DVL1 and MUSK that is important for MUSK-dependent regulation of AChR clustering during the formation of the neuromuscular junction (NMJ). Activity is inhibited in cells undergoing apoptosis, potentially due to binding of CDC2L1 and CDC2L2. Phosphorylates MYL9/MLC2. Phosphorylates RAF1 at 'Ser-338' and 'Ser-339' resulting in: activation of RAF1, stimulation of RAF1 translocation to mitochondria, phosphorylation of BAD by RAF1, and RAF1 binding to BCL2. Phosphorylates SNAI1 at 'Ser-246' promoting its transcriptional repressor activity by increasing its accumulation in the nucleus. In podocytes, promotes NR3C2 nuclear localization. Required for atypical chemokine receptor ACKR2-induced phosphorylation of LIMK1 and cofilin (CFL1) and for the up-regulation of ACKR2 from endosomal compartment to cell membrane, increasing its efficiency in chemokine uptake and degradation. In synapses, seems to mediate the regulation of F-actin cluster formation performed by SHANK3, maybe through CFL1 phosphorylation and inactivation. Plays a role in RUFY3-mediated facilitating gastric cancer cells migration and invasion. In response to DNA damage, phosphorylates MORC2 which activates its ATPase activity and facilitates chromatin remodeling. In neurons, plays a crucial role in regulating GABA(A) receptor synaptic stability and hence GABAergic inhibitory synaptic transmission through its role in F-actin stabilization. In hippocampal neurons, necessary for the formation of dendritic spines and excitatory synapses; this function is dependent on kinase activity and may be exerted by the regulation of actomyosin contractility through the phosphorylation of myosin II regulatory light chain (MLC). Along with GIT1, positively regulates microtubule nucleation during interphase. Phosphorylates FXR1, promoting its localization to stress granules and activity. Phosphorylates ILK on 'Thr-173' and 'Ser-246', promoting nuclear export of ILK. In Mus musculus (Mouse), this protein is Serine/threonine-protein kinase PAK 1.